We begin with the raw amino-acid sequence, 629 residues long: uncharacterized protein (629 aa).

Methionine 1 is modified (N-acetylmethionine). The segment at valine 308–alanine 395 is disordered. Over residues serine 322–serine 334 the composition is skewed to polar residues. The VWFA domain maps to leucine 451–valine 587.

The protein belongs to the Mg-chelatase subunits D/I family.

This is an uncharacterized protein from Mycobacterium tuberculosis (strain ATCC 25618 / H37Rv).